The primary structure comprises 352 residues: Phosphate acyltransferase (352 aa).

Basic and acidic residues predominate over residues 328–339; that stretch reads ESFPGDAREREG. Residues 328–352 are disordered; it reads ESFPGDAREREGAQAPDAGTERVAS.

It belongs to the PlsX family. As to quaternary structure, homodimer. Probably interacts with PlsY.

The protein resides in the cytoplasm. It catalyses the reaction a fatty acyl-[ACP] + phosphate = an acyl phosphate + holo-[ACP]. The protein operates within lipid metabolism; phospholipid metabolism. In terms of biological role, catalyzes the reversible formation of acyl-phosphate (acyl-PO(4)) from acyl-[acyl-carrier-protein] (acyl-ACP). This enzyme utilizes acyl-ACP as fatty acyl donor, but not acyl-CoA. The polypeptide is Phosphate acyltransferase (Geobacter sp. (strain M21)).